The sequence spans 324 residues: Beta-ketoacyl-[acyl-carrier-protein] synthase III (324 aa).

Active-site residues include C112 and H249. The segment at 250-254 (QANDR) is ACP-binding. The active site involves N279.

This sequence belongs to the thiolase-like superfamily. FabH family. As to quaternary structure, homodimer.

Its subcellular location is the cytoplasm. It carries out the reaction malonyl-[ACP] + acetyl-CoA + H(+) = 3-oxobutanoyl-[ACP] + CO2 + CoA. The protein operates within lipid metabolism; fatty acid biosynthesis. Its function is as follows. Catalyzes the condensation reaction of fatty acid synthesis by the addition to an acyl acceptor of two carbons from malonyl-ACP. Catalyzes the first condensation reaction which initiates fatty acid synthesis and may therefore play a role in governing the total rate of fatty acid production. Possesses both acetoacetyl-ACP synthase and acetyl transacylase activities. Its substrate specificity determines the biosynthesis of branched-chain and/or straight-chain of fatty acids. The polypeptide is Beta-ketoacyl-[acyl-carrier-protein] synthase III (Streptococcus pneumoniae serotype 19F (strain G54)).